Consider the following 185-residue polypeptide: Elongation factor P (185 aa).

The protein belongs to the elongation factor P family.

The protein resides in the cytoplasm. The protein operates within protein biosynthesis; polypeptide chain elongation. In terms of biological role, involved in peptide bond synthesis. Stimulates efficient translation and peptide-bond synthesis on native or reconstituted 70S ribosomes in vitro. Probably functions indirectly by altering the affinity of the ribosome for aminoacyl-tRNA, thus increasing their reactivity as acceptors for peptidyl transferase. This is Elongation factor P from Clostridium kluyveri (strain ATCC 8527 / DSM 555 / NBRC 12016 / NCIMB 10680 / K1).